We begin with the raw amino-acid sequence, 128 residues long: L-ectoine synthase (128 aa).

This sequence belongs to the ectoine synthase family.

It catalyses the reaction (2S)-4-acetamido-2-aminobutanoate = L-ectoine + H2O. It functions in the pathway amine and polyamine biosynthesis; ectoine biosynthesis; L-ectoine from L-aspartate 4-semialdehyde: step 3/3. Catalyzes the circularization of gamma-N-acetyl-alpha,gamma-diaminobutyric acid (ADABA) to ectoine (1,4,5,6-tetrahydro-2-methyl-4-pyrimidine carboxylic acid), which is an excellent osmoprotectant. This Vibrio atlanticus (strain LGP32) (Vibrio splendidus (strain Mel32)) protein is L-ectoine synthase.